Here is a 385-residue protein sequence, read N- to C-terminus: Rhomboid domain-containing protein 3 (385 aa).

The next 5 membrane-spanning stretches (helical) occupy residues 13-33 (ALPLASSVLMLLLSCLWLLGA), 58-78 (LGHTALPGLLLSLLLLPTLGW), 95-115 (VLALATGLLAVLLAGLGVSGA), 146-166 (WLLPWLLLALTLLLSSEPPFL), and 168-188 (LLCGLLTGLAYAAGAFQWLEL). Residues 238–264 (PPYLASSDSWPHSDGSAQLPPRLGPGQ) are disordered. The UBA domain occupies 322-361 (SVSSLRLQQLQHMGFPTEQAAVALAATGRVEGAVSLLVEG).

It is found in the membrane. The chain is Rhomboid domain-containing protein 3 (Rhbdd3) from Mus musculus (Mouse).